The chain runs to 146 residues: MDPALRSYHQRLRLYTPIARGVNLAARSPPLVREARAVVTPRPPIRPSSGKASSDDADVGDELIAIADARGDPPETLPPGAGGAAPACRRPPRGGSPAAFPVALHAVDAPSQFVTWLAVRWLRGAVGLGAVLCGIAFYVTSIARGA.

Positions 63-93 are disordered; that stretch reads LIAIADARGDPPETLPPGAGGAAPACRRPPR. Over residues 84-93 the composition is skewed to low complexity; the sequence is AAPACRRPPR.

Belongs to the HHV-1 US8.5 protein family. Post-translationally, phosphorylated.

It localises to the host nucleus. The protein localises to the host nucleolus. This is Protein US8.5 from Human herpesvirus 2 (strain HG52) (HHV-2).